The following is a 362-amino-acid chain: 3-dehydroquinate synthase (362 aa).

Residues 71 to 76, 105 to 109, 129 to 130, lysine 142, lysine 151, and 169 to 172 each bind NAD(+); these read DGEKYK, GVIGD, TT, and CLKT. Glutamate 184, histidine 247, and histidine 264 together coordinate Zn(2+).

It belongs to the sugar phosphate cyclases superfamily. Dehydroquinate synthase family. The cofactor is Co(2+). It depends on Zn(2+) as a cofactor. NAD(+) serves as cofactor.

It localises to the cytoplasm. It carries out the reaction 7-phospho-2-dehydro-3-deoxy-D-arabino-heptonate = 3-dehydroquinate + phosphate. It functions in the pathway metabolic intermediate biosynthesis; chorismate biosynthesis; chorismate from D-erythrose 4-phosphate and phosphoenolpyruvate: step 2/7. Functionally, catalyzes the conversion of 3-deoxy-D-arabino-heptulosonate 7-phosphate (DAHP) to dehydroquinate (DHQ). This chain is 3-dehydroquinate synthase, found in Citrobacter koseri (strain ATCC BAA-895 / CDC 4225-83 / SGSC4696).